A 579-amino-acid chain; its full sequence is Protein inscuteable homolog (579 aa).

The segment at 74-89 is important for interaction with GPSM2; the sequence is SVQRWMEDLKLMTECE. The short motif at 576-579 is the PDZ-binding element; sequence ESFV.

Interacts with ALS2CR19/PAR3B and F2RL2/PAR3. Interacts with GPSM1/AGS3 and GPSM2/LGN (via TPR repeat region). Identified in a complex with GPSM2 and F2RL2. As to expression, isoform 1 is expressed in various tissues with stronger expression in liver, kidney and small intestine. Isoform 2 is abundantly expressed in small intestine and to a lower extent in lung and pancreas.

The protein resides in the cytoplasm. It localises to the cell cortex. May function as an adapter linking the Par3 complex to the GPSM1/GPSM2 complex. Involved in spindle orientation during mitosis. May regulate cell proliferation and differentiation in the developing nervous system. May play a role in the asymmetric division of fibroblasts and participate in the process of stratification of the squamous epithelium. The chain is Protein inscuteable homolog (INSC) from Homo sapiens (Human).